Here is a 470-residue protein sequence, read N- to C-terminus: Protein nucleotidyltransferase YdiU (470 aa).

8 residues coordinate ATP: G86, G88, R89, K109, D121, G122, R172, and R179. Catalysis depends on D244, which acts as the Proton acceptor. Mg(2+)-binding residues include N245 and D254. D254 contributes to the ATP binding site.

The protein belongs to the SELO family. Mg(2+) serves as cofactor. Requires Mn(2+) as cofactor.

The enzyme catalyses L-seryl-[protein] + ATP = 3-O-(5'-adenylyl)-L-seryl-[protein] + diphosphate. The catalysed reaction is L-threonyl-[protein] + ATP = 3-O-(5'-adenylyl)-L-threonyl-[protein] + diphosphate. It carries out the reaction L-tyrosyl-[protein] + ATP = O-(5'-adenylyl)-L-tyrosyl-[protein] + diphosphate. It catalyses the reaction L-histidyl-[protein] + UTP = N(tele)-(5'-uridylyl)-L-histidyl-[protein] + diphosphate. The enzyme catalyses L-seryl-[protein] + UTP = O-(5'-uridylyl)-L-seryl-[protein] + diphosphate. The catalysed reaction is L-tyrosyl-[protein] + UTP = O-(5'-uridylyl)-L-tyrosyl-[protein] + diphosphate. Nucleotidyltransferase involved in the post-translational modification of proteins. It can catalyze the addition of adenosine monophosphate (AMP) or uridine monophosphate (UMP) to a protein, resulting in modifications known as AMPylation and UMPylation. This is Protein nucleotidyltransferase YdiU from Roseobacter denitrificans (strain ATCC 33942 / OCh 114) (Erythrobacter sp. (strain OCh 114)).